We begin with the raw amino-acid sequence, 430 residues long: Probable dual-specificity RNA methyltransferase RlmN (430 aa).

Glutamate 125 serves as the catalytic Proton acceptor. One can recognise a Radical SAM core domain in the interval 152–395 (RHGRVTLCVS…VTVRDTRGRE (244 aa)). Residues cysteine 159 and cysteine 400 are joined by a disulfide bond. 3 residues coordinate [4Fe-4S] cluster: cysteine 166, cysteine 170, and cysteine 173. Residues 221–222 (GE), serine 255, 278–280 (SLH), and asparagine 357 each bind S-adenosyl-L-methionine. Cysteine 400 functions as the S-methylcysteine intermediate in the catalytic mechanism.

This sequence belongs to the radical SAM superfamily. RlmN family. The cofactor is [4Fe-4S] cluster.

It is found in the cytoplasm. It carries out the reaction adenosine(2503) in 23S rRNA + 2 reduced [2Fe-2S]-[ferredoxin] + 2 S-adenosyl-L-methionine = 2-methyladenosine(2503) in 23S rRNA + 5'-deoxyadenosine + L-methionine + 2 oxidized [2Fe-2S]-[ferredoxin] + S-adenosyl-L-homocysteine. The catalysed reaction is adenosine(37) in tRNA + 2 reduced [2Fe-2S]-[ferredoxin] + 2 S-adenosyl-L-methionine = 2-methyladenosine(37) in tRNA + 5'-deoxyadenosine + L-methionine + 2 oxidized [2Fe-2S]-[ferredoxin] + S-adenosyl-L-homocysteine. Its function is as follows. Specifically methylates position 2 of adenine 2503 in 23S rRNA and position 2 of adenine 37 in tRNAs. The chain is Probable dual-specificity RNA methyltransferase RlmN from Acidothermus cellulolyticus (strain ATCC 43068 / DSM 8971 / 11B).